Reading from the N-terminus, the 293-residue chain is N(1)-aminopropylagmatine ureohydrolase (293 aa).

Mn(2+)-binding residues include H105, D128, H130, D132, D210, and D212.

Belongs to the arginase family. The cofactor is Mn(2+).

The protein resides in the cytoplasm. The catalysed reaction is N(1)-(3-aminopropyl)agmatine + H2O = urea + spermidine. Its pathway is amine and polyamine biosynthesis; spermidine biosynthesis. Involved in the biosynthesis of polyamines which are thought to support the growth of thermophilic microorganisms under high-temperature conditions. It seems that long-chain and branched-chain of polyamines effectively stabilize DNA and RNA, respectively. Catalyzes the decarboxylation of N1-(3-aminopropyl)agmatine to yield spermidine and urea. It cannot use agmatine as substrate. The protein is N(1)-aminopropylagmatine ureohydrolase of Thermus thermophilus (strain ATCC 27634 / DSM 579 / HB8).